A 193-amino-acid chain; its full sequence is dCTP deaminase (193 aa).

DCTP contacts are provided by residues 110 to 115 (RSSLAR), Asp-128, 136 to 138 (VLE), Tyr-171, Lys-178, and Gln-182. The Proton donor/acceptor role is filled by Glu-138. The disordered stretch occupies residues 171–193 (YHQRQDAKYHNQKGAVASRIDKD).

This sequence belongs to the dCTP deaminase family. Homotrimer.

It catalyses the reaction dCTP + H2O + H(+) = dUTP + NH4(+). Its pathway is pyrimidine metabolism; dUMP biosynthesis; dUMP from dCTP (dUTP route): step 1/2. Catalyzes the deamination of dCTP to dUTP. This chain is dCTP deaminase, found in Hamiltonella defensa subsp. Acyrthosiphon pisum (strain 5AT).